We begin with the raw amino-acid sequence, 47 residues long: MAALRQIAFYGKGGIGKSTTSQNTLAALVDHHVPRIPMIIRIGGYAQ.

Position 11–18 (11–18) interacts with ATP; sequence GKGGIGKS.

The protein belongs to the NifH/BchL/ChlL family. In terms of assembly, homodimer. [4Fe-4S] cluster serves as cofactor.

It carries out the reaction N2 + 8 reduced [2Fe-2S]-[ferredoxin] + 16 ATP + 16 H2O = H2 + 8 oxidized [2Fe-2S]-[ferredoxin] + 2 NH4(+) + 16 ADP + 16 phosphate + 6 H(+). Functionally, the key enzymatic reactions in nitrogen fixation are catalyzed by the nitrogenase complex, which has 2 components: the iron protein and the molybdenum-iron protein. This Rhizobium leguminosarum protein is Nitrogenase iron protein (nifH).